The chain runs to 217 residues: MAFFFRPEPKMVTPEEALKGGRHPVLESPQPHTVLGTPITGPWKEGQKRVWIGLGCFWGVEQMYWKMDGVESTSVGYAGGYTPNPTYREVCSGRTGHTEIVEVVYDPEKITLAELVARGLEAHDPTQGYRQGNDVGTQYRSAFYVETGEEAETVRQIVSTYGETLKSHGFGEITTEVDVITPADYYLAEDYHQQYLHKNPDGYCPHHSTGIPCGVEA.

A disordered region spans residues 16–39 (EALKGGRHPVLESPQPHTVLGTPI). Residue Cys-56 is part of the active site.

This sequence belongs to the MsrA Met sulfoxide reductase family.

The catalysed reaction is L-methionyl-[protein] + [thioredoxin]-disulfide + H2O = L-methionyl-(S)-S-oxide-[protein] + [thioredoxin]-dithiol. It carries out the reaction [thioredoxin]-disulfide + L-methionine + H2O = L-methionine (S)-S-oxide + [thioredoxin]-dithiol. Has an important function as a repair enzyme for proteins that have been inactivated by oxidation. Catalyzes the reversible oxidation-reduction of methionine sulfoxide in proteins to methionine. The chain is Peptide methionine sulfoxide reductase MsrA from Corynebacterium efficiens (strain DSM 44549 / YS-314 / AJ 12310 / JCM 11189 / NBRC 100395).